The chain runs to 257 residues: UPF0246 protein Rpic_2164 (257 aa).

This sequence belongs to the UPF0246 family.

This is UPF0246 protein Rpic_2164 from Ralstonia pickettii (strain 12J).